The following is a 494-amino-acid chain: V-type proton ATPase subunit B (494 aa).

ATP is bound at residue R384.

The protein belongs to the ATPase alpha/beta chains family. As to quaternary structure, V-ATPase is a heteromultimeric enzyme made up of two complexes: the ATP-hydrolytic V1 complex and the proton translocation V0 complex. The V1 complex consists of three catalytic AB heterodimers that form a heterohexamer, three peripheral stalks each consisting of EG heterodimers, one central rotor including subunits D and F, and the regulatory subunits C and H. The proton translocation complex V0 consists of the proton transport subunit a, a ring of proteolipid subunits c9c'', rotary subunit d, subunits e and f, and the accessory subunits VhaAC45 and ATP6AP2.

In terms of biological role, non-catalytic subunit of the V1 complex of vacuolar(H+)-ATPase (V-ATPase), a multisubunit enzyme composed of a peripheral complex (V1) that hydrolyzes ATP and a membrane integral complex (V0) that translocates protons. V-ATPase is responsible for acidifying and maintaining the pH of intracellular compartments and in some cell types, is targeted to the plasma membrane, where it is responsible for acidifying the extracellular environment. Essential for the proper assembly and activity of V-ATPase. This chain is V-type proton ATPase subunit B (VHA55), found in Heliothis virescens (Tobacco budworm moth).